A 360-amino-acid polypeptide reads, in one-letter code: E3 ubiquitin-protein ligase HAKAI homolog (360 aa).

Over residues Met1–Pro11 the composition is skewed to basic and acidic residues. A disordered region spans residues Met1–Glu24. Residues Cys72–Asp107 form an RING-type zinc finger. The C2H2-type zinc-finger motif lies at Phe123 to His148. The tract at residues Ala156 to Glu360 is disordered. Composition is skewed to polar residues over residues Gln163 to Thr179, Ser186 to Pro214, and Tyr270 to Asn283. The segment covering Glu293–Gly304 has biased composition (low complexity).

This sequence belongs to the Hakai family. As to quaternary structure, interacts with MTB and VIR. Associates with MTA, MTB, FIP37 and VIR to form the m6A writer complex which is essential for adenosine methylation at specific mRNA sequences.

The protein resides in the nucleus speckle. It localises to the nucleus. It is found in the nucleoplasm. The enzyme catalyses S-ubiquitinyl-[E2 ubiquitin-conjugating enzyme]-L-cysteine + [acceptor protein]-L-lysine = [E2 ubiquitin-conjugating enzyme]-L-cysteine + N(6)-ubiquitinyl-[acceptor protein]-L-lysine.. Its function is as follows. Probable E3 ubiquitin-protein ligase which is a subunit of the N6-methyltransferase complex, a multiprotein complex that mediates N6-methyladenosine (m6A) methylation at the 5'-[AG]GAC-3' consensus sites of some mRNAs. Associates with MTA, MTB, FIP37 and VIR to form the m6A writer complex which is essential for adenosine methylation at specific mRNA sequences. N6-methyladenosine (m6A) plays a role in mRNA stability, processing, translation efficiency and editing. The sequence is that of E3 ubiquitin-protein ligase HAKAI homolog from Arabidopsis thaliana (Mouse-ear cress).